Reading from the N-terminus, the 26-residue chain is Toxin TdII-1 (26 aa).

It belongs to the long (4 C-C) scorpion toxin superfamily. Sodium channel inhibitor family. Beta subfamily. In terms of tissue distribution, expressed by the venom gland.

It is found in the secreted. Beta toxins bind voltage-independently at site-4 of sodium channels (Nav) and shift the voltage of activation toward more negative potentials thereby affecting sodium channel activation and promoting spontaneous and repetitive firing. This toxin is active against mammals and crustaceans. The protein is Toxin TdII-1 of Tityus discrepans (Venezuelan scorpion).